The sequence spans 72 residues: Translation initiation factor IF-1 (72 aa).

Positions 1–72 constitute an S1-like domain; that stretch reads MAKDDVIEID…DKGRITYRYK (72 aa).

The protein belongs to the IF-1 family. As to quaternary structure, component of the 30S ribosomal translation pre-initiation complex which assembles on the 30S ribosome in the order IF-2 and IF-3, IF-1 and N-formylmethionyl-tRNA(fMet); mRNA recruitment can occur at any time during PIC assembly.

The protein localises to the cytoplasm. One of the essential components for the initiation of protein synthesis. Stabilizes the binding of IF-2 and IF-3 on the 30S subunit to which N-formylmethionyl-tRNA(fMet) subsequently binds. Helps modulate mRNA selection, yielding the 30S pre-initiation complex (PIC). Upon addition of the 50S ribosomal subunit IF-1, IF-2 and IF-3 are released leaving the mature 70S translation initiation complex. This chain is Translation initiation factor IF-1, found in Campylobacter fetus subsp. fetus (strain 82-40).